The sequence spans 252 residues: Thiazole synthase (252 aa).

Catalysis depends on lysine 98, which acts as the Schiff-base intermediate with DXP. 1-deoxy-D-xylulose 5-phosphate contacts are provided by residues glycine 159, 185-186 (AG), and 207-208 (AS).

This sequence belongs to the ThiG family. As to quaternary structure, homotetramer. Forms heterodimers with either ThiH or ThiS.

It localises to the cytoplasm. The catalysed reaction is [ThiS sulfur-carrier protein]-C-terminal-Gly-aminoethanethioate + 2-iminoacetate + 1-deoxy-D-xylulose 5-phosphate = [ThiS sulfur-carrier protein]-C-terminal Gly-Gly + 2-[(2R,5Z)-2-carboxy-4-methylthiazol-5(2H)-ylidene]ethyl phosphate + 2 H2O + H(+). Its pathway is cofactor biosynthesis; thiamine diphosphate biosynthesis. Functionally, catalyzes the rearrangement of 1-deoxy-D-xylulose 5-phosphate (DXP) to produce the thiazole phosphate moiety of thiamine. Sulfur is provided by the thiocarboxylate moiety of the carrier protein ThiS. In vitro, sulfur can be provided by H(2)S. The polypeptide is Thiazole synthase (Mycobacterium tuberculosis (strain ATCC 25177 / H37Ra)).